Consider the following 557-residue polypeptide: uncharacterized protein (557 aa).

The Helicase ATP-binding domain occupies 70-224; that stretch reads KVVEKMNGKA…FNLVSLLKPG (155 aa). 82 to 90 provides a ligand contact to ATP; sequence ADEVGLGKT. The DEAH box motif lies at 175–178; that stretch reads DEAH. The 162-residue stretch at 363–524 folds into the Helicase C-terminal domain; sequence QVVDLIKKID…NFEEHLHDIL (162 aa).

Belongs to the SNF2/RAD54 helicase family.

This is an uncharacterized protein from Bacillus subtilis (strain 168).